A 299-amino-acid polypeptide reads, in one-letter code: ATP phosphoribosyltransferase (299 aa).

Belongs to the ATP phosphoribosyltransferase family. Long subfamily. It depends on Mg(2+) as a cofactor.

The protein localises to the cytoplasm. It catalyses the reaction 1-(5-phospho-beta-D-ribosyl)-ATP + diphosphate = 5-phospho-alpha-D-ribose 1-diphosphate + ATP. It functions in the pathway amino-acid biosynthesis; L-histidine biosynthesis; L-histidine from 5-phospho-alpha-D-ribose 1-diphosphate: step 1/9. Feedback inhibited by histidine. Functionally, catalyzes the condensation of ATP and 5-phosphoribose 1-diphosphate to form N'-(5'-phosphoribosyl)-ATP (PR-ATP). Has a crucial role in the pathway because the rate of histidine biosynthesis seems to be controlled primarily by regulation of HisG enzymatic activity. In Shewanella pealeana (strain ATCC 700345 / ANG-SQ1), this protein is ATP phosphoribosyltransferase.